An 88-amino-acid chain; its full sequence is Large ribosomal subunit protein bL27 (88 aa).

This sequence belongs to the bacterial ribosomal protein bL27 family.

The sequence is that of Large ribosomal subunit protein bL27 from Mycobacterium leprae (strain TN).